An 88-amino-acid chain; its full sequence is Protein ORGAN SIZE RELATED 1 (88 aa).

Residues Ile25–Ser76 form an organ Size Related (OSR) domain region. Transmembrane regions (helical) follow at residues Val30–Leu50 and Pro53–Phe73.

Belongs to the plant organ size related (OSR) protein family. In terms of tissue distribution, mostly expressed in flowers, and, to a lower extent, in leaves and cotyledons.

It is found in the membrane. The protein resides in the endoplasmic reticulum. The protein localises to the nucleus. Its subcellular location is the cytoplasm. In terms of biological role, together with ARGOS and ARL, regulates organ growth and final organ size. Promotes both cell expansion and proliferation-dependent organ growth, in an ANT-dependent manner. The sequence is that of Protein ORGAN SIZE RELATED 1 from Arabidopsis thaliana (Mouse-ear cress).